The chain runs to 245 residues: 7-cyano-7-deazaguanine synthase 2 (245 aa).

Residue 12–22 (FSGGQDSTTCL) coordinates ATP. Zn(2+) contacts are provided by Cys-200, Cys-215, Cys-218, and Cys-221.

This sequence belongs to the QueC family. Zn(2+) is required as a cofactor.

The enzyme catalyses 7-carboxy-7-deazaguanine + NH4(+) + ATP = 7-cyano-7-deazaguanine + ADP + phosphate + H2O + H(+). Its pathway is purine metabolism; 7-cyano-7-deazaguanine biosynthesis. Functionally, catalyzes the ATP-dependent conversion of 7-carboxy-7-deazaguanine (CDG) to 7-cyano-7-deazaguanine (preQ(0)). This Mesorhizobium japonicum (strain LMG 29417 / CECT 9101 / MAFF 303099) (Mesorhizobium loti (strain MAFF 303099)) protein is 7-cyano-7-deazaguanine synthase 2.